Consider the following 407-residue polypeptide: Cysteine desulfurase (407 aa).

Position 226 is an N6-(pyridoxal phosphate)lysine (K226). The active-site Cysteine persulfide intermediate is the C364.

This sequence belongs to the class-V pyridoxal-phosphate-dependent aminotransferase family. Csd subfamily. As to quaternary structure, homodimer. Interacts with SufE and the SufBCD complex composed of SufB, SufC and SufD. The interaction with SufE is required to mediate the direct transfer of the sulfur atom from the S-sulfanylcysteine. Pyridoxal 5'-phosphate serves as cofactor.

The protein resides in the cytoplasm. It catalyses the reaction (sulfur carrier)-H + L-cysteine = (sulfur carrier)-SH + L-alanine. It carries out the reaction L-selenocysteine + AH2 = hydrogenselenide + L-alanine + A + H(+). The protein operates within cofactor biosynthesis; iron-sulfur cluster biosynthesis. Functionally, cysteine desulfurases mobilize the sulfur from L-cysteine to yield L-alanine, an essential step in sulfur metabolism for biosynthesis of a variety of sulfur-containing biomolecules. Component of the suf operon, which is activated and required under specific conditions such as oxidative stress and iron limitation. Acts as a potent selenocysteine lyase in vitro, that mobilizes selenium from L-selenocysteine. Selenocysteine lyase activity is however unsure in vivo. The chain is Cysteine desulfurase from Pectobacterium carotovorum subsp. carotovorum (strain PC1).